Consider the following 428-residue polypeptide: Enolase (428 aa).

Gln-163 provides a ligand contact to (2R)-2-phosphoglycerate. Glu-205 functions as the Proton donor in the catalytic mechanism. Mg(2+)-binding residues include Asp-242, Glu-286, and Asp-313. Positions 338, 367, 368, and 389 each coordinate (2R)-2-phosphoglycerate. The active-site Proton acceptor is the Lys-338.

It belongs to the enolase family. It depends on Mg(2+) as a cofactor.

The protein localises to the cytoplasm. It localises to the secreted. The protein resides in the cell surface. The catalysed reaction is (2R)-2-phosphoglycerate = phosphoenolpyruvate + H2O. It functions in the pathway carbohydrate degradation; glycolysis; pyruvate from D-glyceraldehyde 3-phosphate: step 4/5. Catalyzes the reversible conversion of 2-phosphoglycerate (2-PG) into phosphoenolpyruvate (PEP). It is essential for the degradation of carbohydrates via glycolysis. The polypeptide is Enolase (Lactobacillus acidophilus (strain ATCC 700396 / NCK56 / N2 / NCFM)).